A 502-amino-acid polypeptide reads, in one-letter code: Vicilin Jug r 6.0101 (502 aa).

Residues 1-27 (MAFKPKIPIALLLLTSLLAICAGLALA) form the signal peptide. A compositionally biased stretch (basic and acidic residues) spans 67-84 (ARERAERRRSEEGSSREE). The segment at 67 to 100 (ARERAERRRSEEGSSREEGYEEEELGGEREEENP) is disordered. The span at 85–100 (GYEEEELGGEREEENP) shows a compositional bias: acidic residues. Cupin type-1 domains are found at residues 101–259 (YVFE…DQLE) and 302–475 (FNLF…REVE). N-linked (GlcNAc...) asparagine glycosylation is present at Asn-340. A disordered region spans residues 374–401 (HLSSSGSRGQREGSGSSRRRSRSGPSYQ). Over residues 376-389 (SSSGSRGQREGSGS) the composition is skewed to low complexity.

Belongs to the 7S seed storage protein family. Homotrimer. In terms of processing, N-glycosylated; paucimannose-type structures containing xylose. Expressed in seed (at protein level).

Seed storage protein. This chain is Vicilin Jug r 6.0101, found in Juglans regia (English walnut).